Reading from the N-terminus, the 145-residue chain is MIALIQRVSRASVTVDGEITGAIDQGLLVLLGVEQHDDRTKLEKLAHKVMNYRVFSDENGKMNLNVSQVGGSLLVVSQFTLAADTGRGLRPSFSGAGTPEQAERLYDEFVAHCRAQGVPTQTGRFAADMKVELLNDGPVTFHLQV.

The Gly-cisPro motif, important for rejection of L-amino acids signature appears at 137 to 138 (GP).

This sequence belongs to the DTD family. Homodimer.

The protein localises to the cytoplasm. It catalyses the reaction glycyl-tRNA(Ala) + H2O = tRNA(Ala) + glycine + H(+). The enzyme catalyses a D-aminoacyl-tRNA + H2O = a tRNA + a D-alpha-amino acid + H(+). Functionally, an aminoacyl-tRNA editing enzyme that deacylates mischarged D-aminoacyl-tRNAs. Also deacylates mischarged glycyl-tRNA(Ala), protecting cells against glycine mischarging by AlaRS. Acts via tRNA-based rather than protein-based catalysis; rejects L-amino acids rather than detecting D-amino acids in the active site. By recycling D-aminoacyl-tRNA to D-amino acids and free tRNA molecules, this enzyme counteracts the toxicity associated with the formation of D-aminoacyl-tRNA entities in vivo and helps enforce protein L-homochirality. This Shewanella amazonensis (strain ATCC BAA-1098 / SB2B) protein is D-aminoacyl-tRNA deacylase.